Consider the following 190-residue polypeptide: Mitochondrial inner membrane protease subunit 1 (190 aa).

Catalysis depends on residues serine 40 and lysine 84.

Belongs to the peptidase S26 family. IMP1 subfamily. Component of the mitochondrial inner membrane peptidase (IMP) complex which at least consists of IMP1, IMP2 and SOM1.

It is found in the mitochondrion inner membrane. Functionally, catalytic component of the mitochondrial inner membrane peptidase (IMP) complex. IMP catalyzes the removal of signal peptides required for the targeting of proteins from the mitochondrial matrix, across the inner membrane, into the inter-membrane space. The two catalytic IMP subunits seem to have non-overlapping substrate specificities. IMP1 substrates include nuclear encoded CYB2, mitochondrially encoded COX2, NADH-cytochrome b5 reductase and GUT2. The polypeptide is Mitochondrial inner membrane protease subunit 1 (IMP1) (Saccharomyces cerevisiae (strain ATCC 204508 / S288c) (Baker's yeast)).